Here is a 248-residue protein sequence, read N- to C-terminus: Aspartate/glutamate leucyltransferase (248 aa).

This sequence belongs to the R-transferase family. Bpt subfamily.

The protein resides in the cytoplasm. The enzyme catalyses N-terminal L-glutamyl-[protein] + L-leucyl-tRNA(Leu) = N-terminal L-leucyl-L-glutamyl-[protein] + tRNA(Leu) + H(+). The catalysed reaction is N-terminal L-aspartyl-[protein] + L-leucyl-tRNA(Leu) = N-terminal L-leucyl-L-aspartyl-[protein] + tRNA(Leu) + H(+). Its function is as follows. Functions in the N-end rule pathway of protein degradation where it conjugates Leu from its aminoacyl-tRNA to the N-termini of proteins containing an N-terminal aspartate or glutamate. This chain is Aspartate/glutamate leucyltransferase, found in Methylobacterium sp. (strain 4-46).